A 370-amino-acid polypeptide reads, in one-letter code: DNA replication and repair protein RecF (370 aa).

Position 30–37 (30–37 (GENAQGKT)) interacts with ATP.

The protein belongs to the RecF family.

The protein localises to the cytoplasm. Its function is as follows. The RecF protein is involved in DNA metabolism; it is required for DNA replication and normal SOS inducibility. RecF binds preferentially to single-stranded, linear DNA. It also seems to bind ATP. The chain is DNA replication and repair protein RecF from Bacillus pumilus (strain SAFR-032).